A 444-amino-acid chain; its full sequence is Phosphomethylpyrimidine synthase (444 aa).

Substrate contacts are provided by residues Asn-80, Met-109, Tyr-138, His-174, 194-196 (SRG), 235-238 (DSLR), and Glu-274. Zn(2+) is bound at residue His-278. Residue Tyr-301 coordinates substrate. His-342 serves as a coordination point for Zn(2+). 3 residues coordinate [4Fe-4S] cluster: Cys-422, Cys-425, and Cys-430.

This sequence belongs to the ThiC family. Homodimer. [4Fe-4S] cluster serves as cofactor.

The enzyme catalyses 5-amino-1-(5-phospho-beta-D-ribosyl)imidazole + S-adenosyl-L-methionine = 4-amino-2-methyl-5-(phosphooxymethyl)pyrimidine + CO + 5'-deoxyadenosine + formate + L-methionine + 3 H(+). It participates in cofactor biosynthesis; thiamine diphosphate biosynthesis. Catalyzes the synthesis of the hydroxymethylpyrimidine phosphate (HMP-P) moiety of thiamine from aminoimidazole ribotide (AIR) in a radical S-adenosyl-L-methionine (SAM)-dependent reaction. The chain is Phosphomethylpyrimidine synthase from Nitratiruptor sp. (strain SB155-2).